The following is a 148-amino-acid chain: Large ribosomal subunit protein bL9 (148 aa).

The protein belongs to the bacterial ribosomal protein bL9 family.

Its function is as follows. Binds to the 23S rRNA. The chain is Large ribosomal subunit protein bL9 from Parabacteroides distasonis (strain ATCC 8503 / DSM 20701 / CIP 104284 / JCM 5825 / NCTC 11152).